Reading from the N-terminus, the 229-residue chain is Oxidation resistance protein 1 (229 aa).

Residues 1-44 (MDSSDRPSLRQRLSNWGRTDTKPAATDLTAPPNDPSENMELPPL) form a disordered region. The region spanning 59–228 (KIMTTELADE…VVAVEVWRVG (170 aa)) is the TLDc domain.

Belongs to the OXR1 family.

The protein localises to the mitochondrion. In terms of biological role, may be involved in protection from oxidative damage. This chain is Oxidation resistance protein 1 (OXR1), found in Yarrowia lipolytica (strain CLIB 122 / E 150) (Yeast).